A 474-amino-acid chain; its full sequence is E3 ubiquitin-protein ligase RNF14 (474 aa).

An RWD domain is found at aspartate 11 to tyrosine 137. The D-box motif lies at arginine 37–asparagine 45. The TRIAD supradomain stretch occupies residues lysine 216 to leucine 457. Zn(2+)-binding residues include cysteine 220, cysteine 223, cysteine 238, histidine 240, cysteine 243, cysteine 246, cysteine 265, cysteine 270, cysteine 309, cysteine 314, cysteine 329, cysteine 332, cysteine 337, cysteine 340, and histidine 345. Residues cysteine 220–cysteine 270 form an RING-type 1 zinc finger. The segment at alanine 289–cysteine 350 adopts an IBR-type zinc-finger fold. Serine 348 bears the Phosphoserine mark. Residue cysteine 350 coordinates Zn(2+). Residues lysine 351 to glutamate 395 adopt a coiled-coil conformation. Residues arginine 361–aspartate 474 are interaction with androgen receptor. The Zn(2+) site is built by cysteine 404 and cysteine 407. The RING-type 2; atypical zinc-finger motif lies at cysteine 404–cysteine 433. Residue cysteine 417 is part of the active site. Zn(2+) contacts are provided by cysteine 422, cysteine 425, cysteine 430, cysteine 433, histidine 445, and cysteine 453.

The protein belongs to the RBR family. RNF14 subfamily. In terms of assembly, interacts with GCN1; interaction takes place in response to ribosome collisions and is required for ubiquitination of EEF1A1/eEF1A. Interacts with the ubiquitin-conjugating enzymes UBE2E1 and UBE2E2. Interacts with AR/androgen receptor. Interacts with TCF7/TCF1, TCF7L1/TCF3 and TCF7L2/TCF4; promoting Wnt signaling. RING-type zinc finger-dependent and UBE2E2-dependent autoubiquitination. In terms of tissue distribution, widely expressed.

It localises to the cytoplasm. Its subcellular location is the nucleus. The catalysed reaction is [E2 ubiquitin-conjugating enzyme]-S-ubiquitinyl-L-cysteine + [acceptor protein]-L-lysine = [E2 ubiquitin-conjugating enzyme]-L-cysteine + [acceptor protein]-N(6)-ubiquitinyl-L-lysine.. It functions in the pathway protein modification; protein ubiquitination. E3 ubiquitin-protein ligase that plays a key role in the RNF14-RNF25 translation quality control pathway, a pathway that takes place when a ribosome has stalled during translation, and which promotes ubiquitination and degradation of translation factors on stalled ribosomes. Recruited to stalled ribosomes by the ribosome collision sensor GCN1 and mediates 'Lys-6'-linked ubiquitination of target proteins, leading to their degradation. Mediates ubiquitination of EEF1A1/eEF1A and ETF1/eRF1 translation factors on stalled ribosomes, leading to their degradation. Also catalyzes ubiquitination of ribosomal proteins RPL0, RPL1, RPL12, RPS13 and RPS17. Specifically required to resolve RNA-protein cross-links caused by reactive aldehydes, which trigger translation stress by stalling ribosomes: acts by catalying 'Lys-6'-linked ubiquitination of RNA-protein cross-links, leading to their removal by the ATP-dependent unfoldase VCP and subsequent degradation by the proteasome. Independently of its function in the response to stalled ribosomes, acts as a regulator of transcription in Wnt signaling via its interaction with TCF transcription factors (TCF7/TCF1, TCF7L1/TCF3 and TCF7L2/TCF4). May also play a role as a coactivator for androgen- and, to a lesser extent, progesterone-dependent transcription. This Homo sapiens (Human) protein is E3 ubiquitin-protein ligase RNF14.